Here is a 215-residue protein sequence, read N- to C-terminus: Adenylate kinase (215 aa).

10–15 (GAGKGT) lines the ATP pocket. The interval 30–59 (STGDMFRAAMKNNTELGKKAKSFMDNGDLV) is NMP. AMP-binding positions include T31, R36, 57 to 59 (DLV), 85 to 88 (GFPR), and Q92. An LID region spans residues 126 to 163 (GRWICRTCGKTYHEIYNPPKVPGKCDLDGGELYQREDD). R127 contacts ATP. Zn(2+) contacts are provided by C130 and C133. 136–137 (TY) provides a ligand contact to ATP. Zn(2+) is bound by residues C150 and D153. Residues R160 and R171 each coordinate AMP. Q199 is a binding site for ATP.

This sequence belongs to the adenylate kinase family. As to quaternary structure, monomer.

The protein localises to the cytoplasm. The enzyme catalyses AMP + ATP = 2 ADP. The protein operates within purine metabolism; AMP biosynthesis via salvage pathway; AMP from ADP: step 1/1. Functionally, catalyzes the reversible transfer of the terminal phosphate group between ATP and AMP. Plays an important role in cellular energy homeostasis and in adenine nucleotide metabolism. This Listeria innocua serovar 6a (strain ATCC BAA-680 / CLIP 11262) protein is Adenylate kinase.